Reading from the N-terminus, the 672-residue chain is Transcriptional regulator Kaiso (672 aa).

The segment at 1 to 103 is interaction with NCOR1; it reads MESRKLISAT…RSDLLDELIK (103 aa). Positions 1–136 are self-association; the sequence is MESRKLISAT…SGTAQDGNTE (136 aa). In terms of domain architecture, BTB spans 32–94; that stretch reads CDVTVIVEDR…IYSSKIVRVR (63 aa). Residues lysine 151 and lysine 153 each participate in a glycyl lysine isopeptide (Lys-Gly) (interchain with G-Cter in SUMO2) cross-link. Threonine 251 carries the phosphothreonine modification. The interval 298-573 is interaction with CBFA2T3; it reads LPNHMPSSIN…FMSSHIKSVH (276 aa). The interval 325–354 is disordered; the sequence is KANEEEEEEIIDDDDDTISSSPDSAVSNTS. Acidic residues predominate over residues 328–341; it reads EEEEEEIIDDDDDT. Residues lysine 390, lysine 407, lysine 414, lysine 449, lysine 465, lysine 474, and lysine 479 each participate in a glycyl lysine isopeptide (Lys-Gly) (interchain with G-Cter in SUMO2) cross-link. The interval 454 to 672 is interaction with CTNND1; that stretch reads EGEARLENEI…EFEFIIPESY (219 aa). Positions 471 to 480 match the Nuclear localization signal motif; it reads MANKRMKVKH. 3 consecutive C2H2-type zinc fingers follow at residues 494-516, 522-544, and 550-573; these read YICI…FNIH, YPCR…EIHH, and YQCL…KSVH. The required for DNA-binding stretch occupies residues 514 to 638; sequence NIHSWEKKYP…TTTSTQNKPM (125 aa). Residues lysine 539, lysine 570, lysine 582, lysine 611, and lysine 618 each participate in a glycyl lysine isopeptide (Lys-Gly) (interchain with G-Cter in SUMO2) cross-link. The disordered stretch occupies residues 616-635; that stretch reads GYKVDTGKEPPVGTTTSTQN.

In terms of assembly, self-associates. Interacts with CTNND2. Interacts with CTNND1, and this interaction inhibits binding to both methylated and non-methylated DNA. Interacts with NCOR1. Interacts with KPNA2/RCH1, which may mediate nuclear import of this protein. Interacts with CBFA2T3. In terms of tissue distribution, expressed in vascular endothelium.

The protein localises to the nucleus. The protein resides in the cytoplasm. Functionally, transcriptional regulator with bimodal DNA-binding specificity. Binds to methylated CpG dinucleotides in the consensus sequence 5'-CGCG-3' and also binds to the non-methylated consensus sequence 5'-CTGCNA-3' also known as the consensus kaiso binding site (KBS). Recruits the N-CoR repressor complex to promote histone deacetylation and the formation of repressive chromatin structures in target gene promoters. May contribute to the repression of target genes of the Wnt signaling pathway. May also activate transcription of a subset of target genes by the recruitment of CTNND2. Represses expression of MMP7 in conjunction with transcriptional corepressors CBFA2T3, CBFA2T2 and RUNX1T1. The sequence is that of Transcriptional regulator Kaiso (ZBTB33) from Homo sapiens (Human).